Reading from the N-terminus, the 193-residue chain is ATP-dependent Clp protease proteolytic subunit (193 aa).

Ser98 functions as the Nucleophile in the catalytic mechanism. Residue His123 is part of the active site.

Belongs to the peptidase S14 family. As to quaternary structure, fourteen ClpP subunits assemble into 2 heptameric rings which stack back to back to give a disk-like structure with a central cavity, resembling the structure of eukaryotic proteasomes.

Its subcellular location is the cytoplasm. It carries out the reaction Hydrolysis of proteins to small peptides in the presence of ATP and magnesium. alpha-casein is the usual test substrate. In the absence of ATP, only oligopeptides shorter than five residues are hydrolyzed (such as succinyl-Leu-Tyr-|-NHMec, and Leu-Tyr-Leu-|-Tyr-Trp, in which cleavage of the -Tyr-|-Leu- and -Tyr-|-Trp bonds also occurs).. Functionally, cleaves peptides in various proteins in a process that requires ATP hydrolysis. Has a chymotrypsin-like activity. Plays a major role in the degradation of misfolded proteins. This Glaesserella parasuis serovar 5 (strain SH0165) (Haemophilus parasuis) protein is ATP-dependent Clp protease proteolytic subunit.